Consider the following 81-residue polypeptide: ATP synthase subunit c, chloroplastic (81 aa).

Transmembrane regions (helical) follow at residues P3–G23 and L57–A77.

Belongs to the ATPase C chain family. As to quaternary structure, F-type ATPases have 2 components, F(1) - the catalytic core - and F(0) - the membrane proton channel. F(1) has five subunits: alpha(3), beta(3), gamma(1), delta(1), epsilon(1). F(0) has four main subunits: a(1), b(1), b'(1) and c(10-14). The alpha and beta chains form an alternating ring which encloses part of the gamma chain. F(1) is attached to F(0) by a central stalk formed by the gamma and epsilon chains, while a peripheral stalk is formed by the delta, b and b' chains.

It localises to the plastid. The protein resides in the chloroplast thylakoid membrane. Functionally, f(1)F(0) ATP synthase produces ATP from ADP in the presence of a proton or sodium gradient. F-type ATPases consist of two structural domains, F(1) containing the extramembraneous catalytic core and F(0) containing the membrane proton channel, linked together by a central stalk and a peripheral stalk. During catalysis, ATP synthesis in the catalytic domain of F(1) is coupled via a rotary mechanism of the central stalk subunits to proton translocation. In terms of biological role, key component of the F(0) channel; it plays a direct role in translocation across the membrane. A homomeric c-ring of between 10-14 subunits forms the central stalk rotor element with the F(1) delta and epsilon subunits. In Chaetosphaeridium globosum (Charophycean green alga), this protein is ATP synthase subunit c, chloroplastic.